A 306-amino-acid polypeptide reads, in one-letter code: Oxygen-dependent coproporphyrinogen-III oxidase (306 aa).

Substrate is bound at residue S94. 2 residues coordinate a divalent metal cation: H98 and H108. Catalysis depends on H108, which acts as the Proton donor. 110 to 112 lines the substrate pocket; that stretch reads NVR. A divalent metal cation contacts are provided by H147 and H177. Positions 242–277 are important for dimerization; the sequence is YVEFNLVYDRGTLFGLQTGGRTESILMSMPPLVRWQ. 260–262 is a binding site for substrate; that stretch reads GGR.

This sequence belongs to the aerobic coproporphyrinogen-III oxidase family. As to quaternary structure, homodimer. A divalent metal cation serves as cofactor.

The protein localises to the cytoplasm. The enzyme catalyses coproporphyrinogen III + O2 + 2 H(+) = protoporphyrinogen IX + 2 CO2 + 2 H2O. It participates in porphyrin-containing compound metabolism; protoporphyrin-IX biosynthesis; protoporphyrinogen-IX from coproporphyrinogen-III (O2 route): step 1/1. Involved in the heme biosynthesis. Catalyzes the aerobic oxidative decarboxylation of propionate groups of rings A and B of coproporphyrinogen-III to yield the vinyl groups in protoporphyrinogen-IX. The sequence is that of Oxygen-dependent coproporphyrinogen-III oxidase from Shewanella sediminis (strain HAW-EB3).